We begin with the raw amino-acid sequence, 101 residues long: UPF0213 protein lp_2058 (101 aa).

The GIY-YIG domain maps to 15 to 92; sequence KKYYFYVLLC…KHQSRAAKLK (78 aa).

Belongs to the UPF0213 family.

The chain is UPF0213 protein lp_2058 from Lactiplantibacillus plantarum (strain ATCC BAA-793 / NCIMB 8826 / WCFS1) (Lactobacillus plantarum).